We begin with the raw amino-acid sequence, 310 residues long: UPF0324 membrane protein VP0936 (310 aa).

The next 10 helical transmembrane spans lie at 7–29, 44–63, 75–94, 104–126, 133–155, 165–187, 199–218, 228–250, 257–279, and 289–308; these read PFGLALLFCLTPFVSSPIALVIG, IASFTKKLLSYSIIGLGFGI, GIGLIIATIVGTLVIGSLIA, AYLISSGTAICGGSAIAAVAPAI, IGLALATVFVLNSLALFIFPVIG, FGTWAAIAIHDTSSVVGAASAYG, LARALWIIPVALISAVIFSR, LVIPYFIFWYCAAIAFSDFFPQL, IFTIAKQALVVCLFLIGCSISIS, and LLFGVTLWVLISTTSLSWLV.

This sequence belongs to the UPF0324 family.

It localises to the cell membrane. This chain is UPF0324 membrane protein VP0936, found in Vibrio parahaemolyticus serotype O3:K6 (strain RIMD 2210633).